The sequence spans 167 residues: MPLLDSFKVDHTKMNAPAVRIAKTMCTPKGDNITVFDLRFCIPNKEILSPKGIHTLEHLFAGFMRDHLNGDSIEIIDISPMGCRTGFYMSLIGTPNEQEVSEAWLASMQDVLGVQDQASIPELNIYQCGSYTEHSLEDAHEIAKNVIARGIGVNKNEDLSLDNSLLK.

Fe cation-binding residues include His-54, His-58, and Cys-128.

Belongs to the LuxS family. In terms of assembly, homodimer. Requires Fe cation as cofactor.

The catalysed reaction is S-(5-deoxy-D-ribos-5-yl)-L-homocysteine = (S)-4,5-dihydroxypentane-2,3-dione + L-homocysteine. Involved in the synthesis of autoinducer 2 (AI-2) which is secreted by bacteria and is used to communicate both the cell density and the metabolic potential of the environment. The regulation of gene expression in response to changes in cell density is called quorum sensing. Catalyzes the transformation of S-ribosylhomocysteine (RHC) to homocysteine (HC) and 4,5-dihydroxy-2,3-pentadione (DPD). This chain is S-ribosylhomocysteine lyase, found in Haemophilus influenzae (strain 86-028NP).